The sequence spans 328 residues: Phosphatidylglycerol--prolipoprotein diacylglyceryl transferase (328 aa).

Transmembrane regions (helical) follow at residues 15–35 (VIQGIPITWYSLSYILIILIS), 57–77 (IFMFSLVLGAILGGRLASTLV), and 106–126 (GMAIHGGFLGAIIAPLITINT). R156 contributes to the a 1,2-diacyl-sn-glycero-3-phospho-(1'-sn-glycerol) binding site. 2 helical membrane-spanning segments follow: residues 242–262 (GFIFGVYVMLYAFFRFFIEYL) and 289–309 (ISMGQILSLTLMLSGLIWIIV).

This sequence belongs to the Lgt family.

The protein resides in the cell inner membrane. The catalysed reaction is L-cysteinyl-[prolipoprotein] + a 1,2-diacyl-sn-glycero-3-phospho-(1'-sn-glycerol) = an S-1,2-diacyl-sn-glyceryl-L-cysteinyl-[prolipoprotein] + sn-glycerol 1-phosphate + H(+). It participates in protein modification; lipoprotein biosynthesis (diacylglyceryl transfer). Functionally, catalyzes the transfer of the diacylglyceryl group from phosphatidylglycerol to the sulfhydryl group of the N-terminal cysteine of a prolipoprotein, the first step in the formation of mature lipoproteins. The chain is Phosphatidylglycerol--prolipoprotein diacylglyceryl transferase from Borreliella burgdorferi (strain ATCC 35210 / DSM 4680 / CIP 102532 / B31) (Borrelia burgdorferi).